The chain runs to 184 residues: ATP synthase subunit delta (184 aa).

Belongs to the ATPase delta chain family. In terms of assembly, F-type ATPases have 2 components, F(1) - the catalytic core - and F(0) - the membrane proton channel. F(1) has five subunits: alpha(3), beta(3), gamma(1), delta(1), epsilon(1). CF(0) has four main subunits: a(1), b(1), b'(1) and c(10-14). The alpha and beta chains form an alternating ring which encloses part of the gamma chain. F(1) is attached to F(0) by a central stalk formed by the gamma and epsilon chains, while a peripheral stalk is formed by the delta, b and b' chains.

The protein localises to the cellular thylakoid membrane. In terms of biological role, f(1)F(0) ATP synthase produces ATP from ADP in the presence of a proton or sodium gradient. F-type ATPases consist of two structural domains, F(1) containing the extramembraneous catalytic core and F(0) containing the membrane proton channel, linked together by a central stalk and a peripheral stalk. During catalysis, ATP synthesis in the catalytic domain of F(1) is coupled via a rotary mechanism of the central stalk subunits to proton translocation. Its function is as follows. This protein is part of the stalk that links CF(0) to CF(1). It either transmits conformational changes from CF(0) to CF(1) or is implicated in proton conduction. The sequence is that of ATP synthase subunit delta from Gloeothece citriformis (strain PCC 7424) (Cyanothece sp. (strain PCC 7424)).